A 301-amino-acid chain; its full sequence is uncharacterized protein (301 aa).

Residues Glu146, Glu148, and Asp177 each contribute to the a divalent metal cation site.

It belongs to the FAH family.

This is an uncharacterized protein from Staphylococcus haemolyticus (strain JCSC1435).